Consider the following 331-residue polypeptide: Anthranilate phosphoribosyltransferase (331 aa).

Residues Gly-79, 82–83, Thr-87, 89–92, 107–115, and Ser-119 each bind 5-phospho-alpha-D-ribose 1-diphosphate; these read GD, NVST, and KHGNYGVSS. Gly-79 contacts anthranilate. Ser-91 is a Mg(2+) binding site. Residue Asn-110 coordinates anthranilate. Residue Arg-165 participates in anthranilate binding. Asp-223 and Glu-224 together coordinate Mg(2+).

This sequence belongs to the anthranilate phosphoribosyltransferase family. As to quaternary structure, homodimer. Mg(2+) serves as cofactor.

It carries out the reaction N-(5-phospho-beta-D-ribosyl)anthranilate + diphosphate = 5-phospho-alpha-D-ribose 1-diphosphate + anthranilate. Its pathway is amino-acid biosynthesis; L-tryptophan biosynthesis; L-tryptophan from chorismate: step 2/5. Functionally, catalyzes the transfer of the phosphoribosyl group of 5-phosphorylribose-1-pyrophosphate (PRPP) to anthranilate to yield N-(5'-phosphoribosyl)-anthranilate (PRA). The sequence is that of Anthranilate phosphoribosyltransferase from Christiangramia forsetii (strain DSM 17595 / CGMCC 1.15422 / KT0803) (Gramella forsetii).